The primary structure comprises 564 residues: MFS-type transporter kojT (564 aa).

Asparagine 113 carries an N-linked (GlcNAc...) asparagine glycan. Helical transmembrane passes span tryptophan 120 to aspartate 140, serine 159 to phenylalanine 179, proline 187 to proline 207, phenylalanine 217 to isoleucine 237, valine 249 to glycine 269, tryptophan 278 to valine 298, isoleucine 353 to leucine 373, glycine 389 to valine 409, leucine 437 to threonine 457, isoleucine 462 to phenylalanine 482, alanine 500 to isoleucine 520, and tryptophan 530 to tyrosine 550.

The protein belongs to the major facilitator superfamily.

It localises to the cell membrane. In terms of biological role, MFS-type transporter; part of the gene cluster that mediates the biosynthesis of 5-hydroxy-2-hydroxymethyl-1,4-pyrone, also know as kojic acid, a by-product in the fermentation process of malting rice that acts as a chelation agent. Involved in the seretion of kojic acid. The polypeptide is MFS-type transporter kojT (Aspergillus flavus (strain ATCC 200026 / FGSC A1120 / IAM 13836 / NRRL 3357 / JCM 12722 / SRRC 167)).